A 632-amino-acid polypeptide reads, in one-letter code: MGKVIGIDLGTTNSCVAVMDGKTPKVIENAEGMRTTPSIVAFSDDGERLVGQPAKRQAVTNPERTIFAVKRLIGRRYDDPTVEKDKHLVPYKIAKAGNGDAWVEVDGKTYSPSQISAFTLQKMKETAEAHLGQKVDQAVITVPAYFNDAQRQATKDAGKIAGLEVLRIINEPTAAALAYGLDKAKQGTIAVYDLGGGTFDVSILEIGDGVFEVKSTNGDTFLGGEDFDMRLVSYLADEFQKEQGINLRNDKLALQRLKEAAEKAKIELSSTTQTEINLPFITADQSGPKHLTMKLTRAKFEALVDDLVQKTIEPCRKALKDAGLTAGEIGEVVLVGGMTRMPKVQEVVKQLFGKEPHKGVNPDEVVAIGAAIQAGVLQGDVKDVLLLDVTPLSLGIETLGGVFTRIIDRNTTIPTKKSQVFSTAEDSQNAVTIRVFQGEREMAADNKILGQFDLMGIPPAPRGMPQIEVTFDIDANGIVNVSAKDKATGKEQQIRIQASGGLSEADIDKMVKDAEANAIEDKKRREAVDAKNHADSLVHSTEKALAEHGSKIEDSERRAIEDAVSDLKEALKGDDAEAIKAKTNTLAQASMKLGEAMYKQQAEADAAKDAAKDDVVDAEFTEVDDDKNKKSA.

Thr198 is subject to Phosphothreonine; by autocatalysis. A disordered region spans residues 524 to 557; sequence RREAVDAKNHADSLVHSTEKALAEHGSKIEDSER.

This sequence belongs to the heat shock protein 70 family.

In terms of biological role, acts as a chaperone. The polypeptide is Chaperone protein DnaK (Nitrobacter hamburgensis (strain DSM 10229 / NCIMB 13809 / X14)).